Here is a 326-residue protein sequence, read N- to C-terminus: ELAV-like protein 1 (326 aa).

Ser2 is modified (N-acetylserine). At Ser2 the chain carries Phosphoserine. Residues 20-98 (TNLIVNYLPQ…KTIKVSYARP (79 aa)) enclose the RRM 1 domain. Residues Ser100 and Ser158 each carry the phosphoserine modification. The 81-residue stretch at 106–186 (ANLYISGLPR…EPITVKFAAN (81 aa)) folds into the RRM 2 domain. A Glycyl lysine isopeptide (Lys-Gly) (interchain with G-Cter in SUMO2) cross-link involves residue Lys191. Phosphoserine occurs at positions 197 and 202. The residue at position 206 (Arg206) is an Omega-N-methylarginine. The residue at position 217 (Arg217) is an Asymmetric dimethylarginine; by CARM1; alternate. Position 217 is an omega-N-methylarginine; alternate (Arg217). A phosphoserine mark is found at Ser221 and Ser318. The RRM 3 domain maps to 244 to 322 (WCIFIYNLGQ…KILQVSFKTN (79 aa)).

The protein belongs to the RRM elav family. As to quaternary structure, monomer and homodimer (in vitro). Interacts with ANP32A. Interacts with ZNF385A; the interaction is indirect and mRNA-dependent and may regulate p53/TP53 expression. Identified in a mRNP complex, at least composed of DHX9, DDX3X, ELAVL1, HNRNPU, IGF2BP1, ILF3, PABPC1, PCBP2, PTBP2, STAU1, STAU2, SYNCRIP and YBX1. Interacts with AGO1 and AGO2. Interacts with IGF2BP1; the interaction is enhanced by SEPIN14P20 peptide RBPR. Interacts with IGF2BP2 and IGF2BP3. Interacts with HNRNPL. Interacts with DHX36; this interaction occurs in a RNA-dependent manner. Interacts with ILF3; this interaction occurs in a RNA-dependent manner. Interacts with PLEKHN1. Interacts with SHFL; the interaction increases in presence of RNA. Interacts with YBX1; interaction recruits ELAVL1 on C5-methylcytosine (m5C)-containing mRNAs, thereby promoting mRNA stability. Interacts with FXR1. Phosphorylated by MAPKAPK2. Phosphorylated by PRKCD. Post-translationally, methylated at Arg-217 by CARM1 in macrophages in response to LPS challenge. Ubiquitous. Detected in brain, liver, thymus and muscle.

It localises to the cytoplasm. Its subcellular location is the nucleus. It is found in the stress granule. The protein resides in the P-body. Functionally, RNA-binding protein that binds to the 3'-UTR region of mRNAs and increases their stability. Involved in embryonic stem cell (ESC) differentiation: preferentially binds mRNAs that are not methylated by N6-methyladenosine (m6A), stabilizing them, promoting ESC differentiation. Has also been shown to be capable of binding to m6A-containing mRNAs and contributes to MYC stability by binding to m6A-containing MYC mRNAs. Binds to poly-U elements and AU-rich elements (AREs) in the 3'-UTR of target mRNAs. Binds avidly to the AU-rich element in FOS and IL3/interleukin-3 mRNAs. In the case of the FOS AU-rich element, binds to a core element of 27 nucleotides that contain AUUUA, AUUUUA, and AUUUUUA motifs. Binds preferentially to the 5'-UUUU[AG]UUU-3' motif in vitro. With ZNF385A, binds the 3'-UTR of p53/TP53 mRNA to control their nuclear export induced by CDKN2A. Hence, may regulate p53/TP53 expression and mediate in part the CDKN2A anti-proliferative activity. May also bind with ZNF385A the CCNB1 mRNA. Increases the stability of the leptin mRNA harboring an AU-rich element (ARE) in its 3' UTR. This is ELAV-like protein 1 (ELAVL1) from Homo sapiens (Human).